Reading from the N-terminus, the 351-residue chain is Methylthioribose-1-phosphate isomerase (351 aa).

Substrate is bound by residues 55–57 (RGA), arginine 95, and glutamine 202. The active-site Proton donor is the aspartate 243. 253-254 (NK) contacts substrate.

This sequence belongs to the eIF-2B alpha/beta/delta subunits family. MtnA subfamily.

The enzyme catalyses 5-(methylsulfanyl)-alpha-D-ribose 1-phosphate = 5-(methylsulfanyl)-D-ribulose 1-phosphate. It participates in amino-acid biosynthesis; L-methionine biosynthesis via salvage pathway; L-methionine from S-methyl-5-thio-alpha-D-ribose 1-phosphate: step 1/6. Functionally, catalyzes the interconversion of methylthioribose-1-phosphate (MTR-1-P) into methylthioribulose-1-phosphate (MTRu-1-P). The polypeptide is Methylthioribose-1-phosphate isomerase (Marinobacter nauticus (strain ATCC 700491 / DSM 11845 / VT8) (Marinobacter aquaeolei)).